The primary structure comprises 607 residues: Large ribosomal subunit assembly factor BipA (607 aa).

The 196-residue stretch at 3-198 folds into the tr-type G domain; it reads EKLRNIAIIA…AIVDHVPAPD (196 aa). GTP contacts are provided by residues 15-20 and 128-131; these read DHGKTT and NKVD.

This sequence belongs to the TRAFAC class translation factor GTPase superfamily. Classic translation factor GTPase family. BipA subfamily. In terms of assembly, monomer.

Its subcellular location is the cytoplasm. It catalyses the reaction GTP + H2O = GDP + phosphate + H(+). In terms of biological role, a 50S ribosomal subunit assembly protein with GTPase activity, required for 50S subunit assembly at low temperatures, may also play a role in translation. Binds GTP and analogs. Binds the 70S ribosome between the 30S and 50S subunits, in a similar position as ribosome-bound EF-G; it contacts a number of ribosomal proteins, both rRNAs and the A-site tRNA. This is Large ribosomal subunit assembly factor BipA from Shigella flexneri.